Reading from the N-terminus, the 590-residue chain is Aspartate--tRNA(Asp/Asn) ligase (590 aa).

Position 172 (Glu-172) interacts with L-aspartate. The aspartate stretch occupies residues Gln-196–Lys-199. Arg-218 is an L-aspartate binding site. ATP is bound by residues Arg-218–Glu-220 and Gln-227. Position 449 (His-449) interacts with L-aspartate. Glu-484 serves as a coordination point for ATP. Arg-491 contributes to the L-aspartate binding site. An ATP-binding site is contributed by Gly-536–Arg-539.

It belongs to the class-II aminoacyl-tRNA synthetase family. Type 1 subfamily. In terms of assembly, homodimer.

It localises to the cytoplasm. It catalyses the reaction tRNA(Asx) + L-aspartate + ATP = L-aspartyl-tRNA(Asx) + AMP + diphosphate. In terms of biological role, aspartyl-tRNA synthetase with relaxed tRNA specificity since it is able to aspartylate not only its cognate tRNA(Asp) but also tRNA(Asn). Reaction proceeds in two steps: L-aspartate is first activated by ATP to form Asp-AMP and then transferred to the acceptor end of tRNA(Asp/Asn). This Francisella tularensis subsp. tularensis (strain WY96-3418) protein is Aspartate--tRNA(Asp/Asn) ligase.